The following is a 373-amino-acid chain: Histidinol-phosphate aminotransferase (373 aa).

An N6-(pyridoxal phosphate)lysine modification is found at K233.

It belongs to the class-II pyridoxal-phosphate-dependent aminotransferase family. Histidinol-phosphate aminotransferase subfamily. As to quaternary structure, homodimer. Pyridoxal 5'-phosphate serves as cofactor.

The enzyme catalyses L-histidinol phosphate + 2-oxoglutarate = 3-(imidazol-4-yl)-2-oxopropyl phosphate + L-glutamate. The protein operates within amino-acid biosynthesis; L-histidine biosynthesis; L-histidine from 5-phospho-alpha-D-ribose 1-diphosphate: step 7/9. The polypeptide is Histidinol-phosphate aminotransferase (Nitratidesulfovibrio vulgaris (strain DP4) (Desulfovibrio vulgaris)).